The primary structure comprises 660 residues: Putative ABC transporter ATP-binding MG390 (660 aa).

The region spanning 6-126 is the Peptidase C39 domain; it reads QEQQNECGIC…KLWTGYAATV (121 aa). Cys12 is a catalytic residue. A run of 6 helical transmembrane segments spans residues 150-170, 188-208, 265-285, 290-310, 379-399, and 402-422; these read LVTFYVFIELIIIGISTLLAT, LVVLVVYFSCLKGLNLLLQVI, YIPNLIISCVVALIIGVLIGI, FLLIAIAQIVVNAGLFCYDFF, SFFQQGFDFAILGLGVIGIIE, and YQLSFLFYVFGIQSLFSTYAT. One can recognise an ABC transporter domain in the interval 464–657; sequence ISLENLSVTL…QNKINLTNYL (194 aa). ATP is bound at residue 494-501; it reads GQNGSGKS.

The protein belongs to the ABC transporter superfamily.

Its subcellular location is the cell membrane. The polypeptide is Putative ABC transporter ATP-binding MG390 (Mycoplasma genitalium (strain ATCC 33530 / DSM 19775 / NCTC 10195 / G37) (Mycoplasmoides genitalium)).